Here is a 594-residue protein sequence, read N- to C-terminus: UvrABC system protein C (594 aa).

Residues 14–91 enclose the GIY-YIG domain; it reads DQPGCYLMKD…IKKYDPKYNI (78 aa). The region spanning 196–231 is the UVR domain; it reads KEVRSELEIKMYEASEKLEFERAKELRDQIAHIDAI.

It belongs to the UvrC family. Interacts with UvrB in an incision complex.

The protein localises to the cytoplasm. Functionally, the UvrABC repair system catalyzes the recognition and processing of DNA lesions. UvrC both incises the 5' and 3' sides of the lesion. The N-terminal half is responsible for the 3' incision and the C-terminal half is responsible for the 5' incision. This is UvrABC system protein C from Bacillus cereus (strain G9842).